A 263-amino-acid chain; its full sequence is Small ribosomal subunit protein eS4, X isoform (263 aa).

The S4 RNA-binding domain maps to 42 to 104 (LPLIIFLRNR…TGEHFRLVYD (63 aa)). A Glycyl lysine isopeptide (Lys-Gly) (interchain with G-Cter in SUMO2) cross-link involves residue K230. N6-acetyllysine is present on K233.

The protein belongs to the eukaryotic ribosomal protein eS4 family. In terms of assembly, component of the small ribosomal subunit. Part of the small subunit (SSU) processome, composed of more than 70 proteins and the RNA chaperone small nucleolar RNA (snoRNA) U3. Identified in a IGF2BP1-dependent mRNP granule complex containing untranslated mRNAs.

It is found in the cytoplasm. It localises to the nucleus. Its subcellular location is the nucleolus. In terms of biological role, component of the small ribosomal subunit. The ribosome is a large ribonucleoprotein complex responsible for the synthesis of proteins in the cell. Part of the small subunit (SSU) processome, first precursor of the small eukaryotic ribosomal subunit. During the assembly of the SSU processome in the nucleolus, many ribosome biogenesis factors, an RNA chaperone and ribosomal proteins associate with the nascent pre-rRNA and work in concert to generate RNA folding, modifications, rearrangements and cleavage as well as targeted degradation of pre-ribosomal RNA by the RNA exosome. The sequence is that of Small ribosomal subunit protein eS4, X isoform (RPS4X) from Monodelphis domestica (Gray short-tailed opossum).